A 93-amino-acid chain; its full sequence is Cobalt transport protein CbiN (93 aa).

Transmembrane regions (helical) follow at residues 5–25 (LILLAMVIALVILPFFIDHGG) and 62–82 (SLLFTLQGSLGAAVIFYILGY).

The protein belongs to the CbiN family. As to quaternary structure, forms an energy-coupling factor (ECF) transporter complex composed of an ATP-binding protein (A component, CbiO), a transmembrane protein (T component, CbiQ) and 2 possible substrate-capture proteins (S components, CbiM and CbiN) of unknown stoichimetry.

It localises to the cell inner membrane. Its pathway is cofactor biosynthesis; adenosylcobalamin biosynthesis. Functionally, part of the energy-coupling factor (ECF) transporter complex CbiMNOQ involved in cobalt import. The protein is Cobalt transport protein CbiN of Citrobacter koseri (strain ATCC BAA-895 / CDC 4225-83 / SGSC4696).